The sequence spans 344 residues: E3 ubiquitin-protein ligase RING2-A (344 aa).

Positions alanine 2–valine 181 are interaction with HIP2. The segment at cysteine 48–arginine 88 adopts an RING-type zinc-finger fold. The interaction with nucleosomes via an acidic patch on histone H2A and histone H2B stretch occupies residues lysine 90–arginine 95. Residues glutamine 148–serine 230 are disordered. The segment covering histidine 180–alanine 192 has biased composition (polar residues).

Component of chromatin-associated Polycomb (PcG) complexes. Component of a PRC1-like complex. Component of some MLL1/MLL complex.

The protein resides in the nucleus. The protein localises to the cytoplasm. Its subcellular location is the chromosome. The catalysed reaction is S-ubiquitinyl-[E2 ubiquitin-conjugating enzyme]-L-cysteine + [acceptor protein]-L-lysine = [E2 ubiquitin-conjugating enzyme]-L-cysteine + N(6)-ubiquitinyl-[acceptor protein]-L-lysine.. It participates in protein modification; protein ubiquitination. In terms of biological role, E3 ubiquitin-protein ligase that mediates monoubiquitination of 'Lys-119' of histone H2A (H2AK119Ub), thereby playing a central role in histone code and gene regulation. H2AK119Ub gives a specific tag for epigenetic transcriptional repression. Essential component of a Polycomb group (PcG) multiprotein PRC1-like complex, a complex class required to maintain the transcriptionally repressive state of many genes, including Hox genes, throughout development. PcG PRC1 complex acts via chromatin remodeling and modification of histones, rendering chromatin heritably changed in its expressibility. The chain is E3 ubiquitin-protein ligase RING2-A (rnf2-a) from Xenopus laevis (African clawed frog).